The sequence spans 247 residues: 3-deoxy-manno-octulosonate cytidylyltransferase (247 aa).

It belongs to the KdsB family.

It localises to the cytoplasm. The catalysed reaction is 3-deoxy-alpha-D-manno-oct-2-ulosonate + CTP = CMP-3-deoxy-beta-D-manno-octulosonate + diphosphate. Its pathway is nucleotide-sugar biosynthesis; CMP-3-deoxy-D-manno-octulosonate biosynthesis; CMP-3-deoxy-D-manno-octulosonate from 3-deoxy-D-manno-octulosonate and CTP: step 1/1. The protein operates within bacterial outer membrane biogenesis; lipopolysaccharide biosynthesis. Activates KDO (a required 8-carbon sugar) for incorporation into bacterial lipopolysaccharide in Gram-negative bacteria. The chain is 3-deoxy-manno-octulosonate cytidylyltransferase from Bdellovibrio bacteriovorus (strain ATCC 15356 / DSM 50701 / NCIMB 9529 / HD100).